The following is an 846-amino-acid chain: Vacuolar-sorting protein BRO1 (846 aa).

Positions 5-403 (SLSNLMLAIH…ERLQQASELT (399 aa)) constitute a BRO1 domain. A coiled-coil region spans residues 565–592 (LKQSLRQLENLGAQRAGLEDMLKEMKRK). The disordered stretch occupies residues 726–846 (SFQDHRSSGP…PHQGGGYYRQ (121 aa)). Low complexity-rich tracts occupy residues 763–780 (APYY…YSIP) and 790–823 (TPHG…QGQQ). Residues 824 to 836 (PRPPYPGQSPYQP) show a composition bias toward pro residues.

In terms of assembly, homodimer. Interacts with AMSH3. Interacts with VPS32.1/SNF7B and VPS32.2/SNF7A. Interacts with ELC/VPS23A.

It is found in the cytoplasm. Its subcellular location is the late endosome. It localises to the endosome. The protein localises to the multivesicular body. Its function is as follows. Class E VPS protein involved in concentration and sorting of cargo proteins of the multivesicular body (MVB) for incorporation into intralumenal vesicles. Fusion between endosomes and the vacuole will then target the cargo proteins to the vacuolar lumen. Associates with FREE1 and ELC to perform function in the ESCRT-I complex. Binds ubiquitin in vitro. Plays a role in the biogenesis of vacuole and multivesicular bodies (MVBs). Required for the endosomal location of AMSH3. Mediates high-affinity phosphate transporter trafficking to maintain phosphate homeostasis. Regulates vacuolar degradation of PHT1-1. This is Vacuolar-sorting protein BRO1 from Arabidopsis thaliana (Mouse-ear cress).